Here is a 156-residue protein sequence, read N- to C-terminus: CASP-like protein 5C1 (156 aa).

Residues 1-24 (MENRERAGAGAVGSAGSLGLRVEQ) lie on the Cytoplasmic side of the membrane. Residues 25-45 (AVFSSASLLFMSVGVEFFSYT) form a helical membrane-spanning segment. A topological domain (extracellular) is located at residue Ala-46. The helical transmembrane segment at 47-67 (FCFLVTIMGLVIPWSCTLAMI) threads the bilayer. Residues 68-81 (DVYSILVGCPLRVP) lie on the Cytoplasmic side of the membrane. The chain crosses the membrane as a helical span at residues 82–102 (GVMVIVVIGDWVLAILSLAAA). The Extracellular portion of the chain corresponds to 103-132 (SSSAAVIDLLLQFHGSHCSPRFCGRYQLSA). Residues 133–153 (MMAFLSWFLTAASSLFNLWFI) form a helical membrane-spanning segment. The Cytoplasmic segment spans residues 154–156 (ASR).

It belongs to the Casparian strip membrane proteins (CASP) family. In terms of assembly, homodimer and heterodimers.

The protein resides in the cell membrane. This is CASP-like protein 5C1 from Oryza sativa subsp. indica (Rice).